The chain runs to 1165 residues: DNA-directed RNA polymerase III subunit RPC2 (1165 aa).

The tract at residues methionine 1–isoleucine 21 is disordered. Positions 1111, 1114, 1123, and 1126 each coordinate Zn(2+). The C4-type zinc-finger motif lies at cysteine 1111 to cysteine 1126.

Belongs to the RNA polymerase beta chain family. Component of the RNA polymerase III (Pol III) complex consisting of 17 subunits.

It localises to the nucleus. It catalyses the reaction RNA(n) + a ribonucleoside 5'-triphosphate = RNA(n+1) + diphosphate. Functionally, DNA-dependent RNA polymerase catalyzes the transcription of DNA into RNA using the four ribonucleoside triphosphates as substrates. Second largest core component of RNA polymerase III which synthesizes small RNAs, such as 5S rRNA and tRNAs. Proposed to contribute to the polymerase catalytic activity and forms the polymerase active center together with the largest subunit. Pol III is composed of mobile elements and RPC2 is part of the core element with the central large cleft and probably a clamp element that moves to open and close the cleft. This chain is DNA-directed RNA polymerase III subunit RPC2 (rpc2), found in Schizosaccharomyces pombe (strain 972 / ATCC 24843) (Fission yeast).